Consider the following 124-residue polypeptide: Holo-[acyl-carrier-protein] synthase (124 aa).

The Mg(2+) site is built by Asp-8 and Glu-58.

The protein belongs to the P-Pant transferase superfamily. AcpS family. It depends on Mg(2+) as a cofactor.

It localises to the cytoplasm. The enzyme catalyses apo-[ACP] + CoA = holo-[ACP] + adenosine 3',5'-bisphosphate + H(+). Transfers the 4'-phosphopantetheine moiety from coenzyme A to a Ser of acyl-carrier-protein. The chain is Holo-[acyl-carrier-protein] synthase from Lacticaseibacillus casei (strain BL23) (Lactobacillus casei).